The chain runs to 774 residues: MASVENRTPNVSVFLCFFVLFATLLLSGGRVSSQTSAVFACDVAKNPALANYGFCNKKLSVDARVKDLVRRLTLQEKVGNLVNSAVDVSRLGIPKYEWWSEALHGVSNIGPGTHFSNVIPGATSFPMPILIAASFNASLFQTIGKVVSTEARAMHNVGLAGLTYWSPNINIFRDPRWGRGQETPGEDPLLASKYAAGYVKGLQQTDDGDSNKLKVAACCKHYTAYDVDDWKGVQRYTFNAVVTQQDLDDTYQPPFKSCVIDGNVASVMCSYNQVNGKPTCADPDLLKGVIRGKWKLNGYIVSDCDSVDVLFKNQHYTKTPEEAAAKSILAGLDLNCGSFLGRYTEGAVKQGLIGEASINNAVYNNFATLMRLGFFDGDPSKQPYGNLGPKDVCTSANQELAREAARQGIVLLKNCAGSLPLNAKAIKSLAVIGPNANATRAMIGNYEGIPCKYTSPLQGLTALVPTSFAAGCPDVQCTNAALDDAKKIAASADATVIVVGANLAIEAESHDRINILLPGQQQQLVTEVANVAKGPVILAIMSGGGMDVSFAKTNKKITSILWVGYPGEAGGAAIADVIFGYHNPSGRLPMTWYPQSYVDKVPMTNMNMRPDPATGYPGRTYRFYKGETVFSFGDGISYSTFEHKLVKAPQLVSVPLAEDHVCRSSKCKSLDVVGEHCQNLAFDIHLRIKNKGKMSSSQTVFLFSTPPAVHNAPQKHLLAFEKVLLTGKSEALVSFKVDVCKDLGLVDELGNRKVALGKHMLHVGDLKHPLSVMI.

The signal sequence occupies residues 1 to 33 (MASVENRTPNVSVFLCFFVLFATLLLSGGRVSS). N-linked (GlcNAc...) asparagine glycosylation is present at Asn136. Asp303 is an active-site residue. A glycan (N-linked (GlcNAc...) asparagine) is linked at Asn437.

This sequence belongs to the glycoside hydrolase 3 family.

The protein resides in the secreted. The protein localises to the extracellular space. Its subcellular location is the extracellular matrix. The enzyme catalyses Hydrolysis of (1-&gt;4)-beta-D-xylans, to remove successive D-xylose residues from the non-reducing termini.. The catalysed reaction is Hydrolysis of terminal non-reducing alpha-L-arabinofuranoside residues in alpha-L-arabinosides.. In terms of biological role, a bifunctional beta-xylosidase/alpha-L-arabinosidase, exo-enzyme that acts synergistically with endohydrolases. Releases xylose and arabinose from cell walls. The chain is Beta-xylosidase/alpha-L-arabinofuranosidase 2 from Medicago sativa subsp. varia (Alfalfa).